The sequence spans 417 residues: Phosphoglycerate kinase 2 (417 aa).

N-acetylserine is present on serine 2. Residues serine 2 and serine 4 each carry the phosphoserine modification. N6-acetyllysine is present on lysine 11. Valine 23, aspartate 24, phenylalanine 25, asparagine 26, glutamine 38, and arginine 39 together coordinate (2R)-3-phosphoglycerate. Residue lysine 48 is modified to N6-acetyllysine. Residues serine 62, histidine 63, glycine 65, and arginine 66 each coordinate (2R)-3-phosphoglycerate. 3 positions are modified to N6-acetyllysine: lysine 75, lysine 86, and lysine 97. Leucine 122 and arginine 123 together coordinate (2R)-3-phosphoglycerate. N6-acetyllysine is present on residues lysine 131 and lysine 146. Histidine 170 and arginine 171 together coordinate (2R)-3-phosphoglycerate. Tyrosine 196 is modified (phosphotyrosine). Position 199 is an N6-acetyllysine (lysine 199). Position 214 (glycine 214) interacts with ADP. Glycine 214 serves as a coordination point for CDP. Residues alanine 215 and lysine 216 each contribute to the AMP site. Alanine 215 is a binding site for ATP. Alanine 215 is a Mg(2+) binding site. Positions 218 and 219 each coordinate Mg(2+). A CDP-binding site is contributed by aspartate 219. Lysine 220 provides a ligand contact to AMP. Lysine 220 lines the ATP pocket. ADP is bound at residue glycine 238. CDP is bound at residue glycine 238. Residue glycine 239 participates in AMP binding. Glycine 239 contributes to the ATP binding site. Lysine 267 and lysine 291 each carry N6-acetyllysine. Residue glycine 313 coordinates AMP. ATP is bound at residue glycine 313. Residues glycine 338 and phenylalanine 343 each coordinate CDP. Phenylalanine 343 provides a ligand contact to ADP. Glutamate 344 is an AMP binding site. ATP-binding residues include glutamate 344, aspartate 375, and threonine 376. Aspartate 375 lines the Mg(2+) pocket.

The protein belongs to the phosphoglycerate kinase family. As to quaternary structure, monomer. The cofactor is Mg(2+).

It localises to the cytoplasm. It carries out the reaction (2R)-3-phosphoglycerate + ATP = (2R)-3-phospho-glyceroyl phosphate + ADP. It participates in carbohydrate degradation; glycolysis; pyruvate from D-glyceraldehyde 3-phosphate: step 2/5. Functionally, essential for sperm motility and male fertility but is not required for the completion of spermatogenesis. This is Phosphoglycerate kinase 2 (PGK2) from Macaca fascicularis (Crab-eating macaque).